We begin with the raw amino-acid sequence, 248 residues long: ATP synthase subunit a (248 aa).

The next 6 membrane-spanning stretches (helical) occupy residues 25 to 45 (IAFT…AVMM), 83 to 103 (FFPL…VGII), 113 to 133 (LIVT…YGLA), 142 to 162 (LFVP…IEVI), 192 to 212 (FIAM…LPLG), and 215 to 235 (IALT…FAIL).

This sequence belongs to the ATPase A chain family. As to quaternary structure, F-type ATPases have 2 components, CF(1) - the catalytic core - and CF(0) - the membrane proton channel. CF(1) has five subunits: alpha(3), beta(3), gamma(1), delta(1), epsilon(1). CF(0) has four main subunits: a, b, b' and c.

It localises to the cell inner membrane. In terms of biological role, key component of the proton channel; it plays a direct role in the translocation of protons across the membrane. The chain is ATP synthase subunit a from Rhodopseudomonas palustris (strain HaA2).